The sequence spans 578 residues: Proline--tRNA ligase (578 aa).

It belongs to the class-II aminoacyl-tRNA synthetase family. ProS type 1 subfamily. Homodimer.

Its subcellular location is the cytoplasm. The enzyme catalyses tRNA(Pro) + L-proline + ATP = L-prolyl-tRNA(Pro) + AMP + diphosphate. Functionally, catalyzes the attachment of proline to tRNA(Pro) in a two-step reaction: proline is first activated by ATP to form Pro-AMP and then transferred to the acceptor end of tRNA(Pro). As ProRS can inadvertently accommodate and process non-cognate amino acids such as alanine and cysteine, to avoid such errors it has two additional distinct editing activities against alanine. One activity is designated as 'pretransfer' editing and involves the tRNA(Pro)-independent hydrolysis of activated Ala-AMP. The other activity is designated 'posttransfer' editing and involves deacylation of mischarged Ala-tRNA(Pro). The misacylated Cys-tRNA(Pro) is not edited by ProRS. This Brachyspira hyodysenteriae (strain ATCC 49526 / WA1) protein is Proline--tRNA ligase.